The sequence spans 505 residues: Trans-cinnamate 4-monooxygenase (505 aa).

The chain crosses the membrane as a helical span at residues 3-23 (LLLVEKTLLALFAAIIASIFI). (E)-cinnamate is bound by residues 213–218 (RSRLAQ) and Ala306. Cys447 contacts heme.

It belongs to the cytochrome P450 family. Requires heme as cofactor.

The protein resides in the membrane. The enzyme catalyses (E)-cinnamate + reduced [NADPH--hemoprotein reductase] + O2 = (E)-4-coumarate + oxidized [NADPH--hemoprotein reductase] + H2O + H(+). It functions in the pathway phenylpropanoid metabolism; trans-4-coumarate biosynthesis; trans-4-coumarate from trans-cinnamate: step 1/1. Its function is as follows. Catalyzes the first oxidative step of the phenylpropanoid pathway in higher plants by transforming trans-cinnamate into p-coumarate. The compounds formed by this pathway are essential components for lignification, pollination, and defense against ultraviolet light, predators and pathogens. This Zinnia elegans (Garden zinnia) protein is Trans-cinnamate 4-monooxygenase (CYP73A12).